We begin with the raw amino-acid sequence, 64 residues long: Metallothionein-like protein 1 (64 aa).

Belongs to the metallothionein superfamily. Type 15 family.

In terms of biological role, metallothioneins have a high content of cysteine residues that bind various heavy metals. This Prunus avium (Cherry) protein is Metallothionein-like protein 1 (MT1).